A 317-amino-acid polypeptide reads, in one-letter code: Probable deoxyhypusine synthase 1 (317 aa).

The active-site Nucleophile is the Lys285.

Belongs to the deoxyhypusine synthase family. NAD(+) is required as a cofactor.

It carries out the reaction [eIF5A protein]-L-lysine + spermidine = [eIF5A protein]-deoxyhypusine + propane-1,3-diamine. The protein operates within protein modification; eIF5A hypusination. In terms of biological role, catalyzes the NAD-dependent oxidative cleavage of spermidine and the subsequent transfer of the butylamine moiety of spermidine to the epsilon-amino group of a specific lysine residue of the eIF-5A precursor protein to form the intermediate deoxyhypusine residue. The chain is Probable deoxyhypusine synthase 1 (dys1) from Methanosarcina acetivorans (strain ATCC 35395 / DSM 2834 / JCM 12185 / C2A).